The sequence spans 841 residues: DNA mismatch repair protein MutS (841 aa).

596–603 (GPNMSGKS) is an ATP binding site.

This sequence belongs to the DNA mismatch repair MutS family.

In terms of biological role, this protein is involved in the repair of mismatches in DNA. It is possible that it carries out the mismatch recognition step. This protein has a weak ATPase activity. The protein is DNA mismatch repair protein MutS of Acholeplasma laidlawii (strain PG-8A).